We begin with the raw amino-acid sequence, 597 residues long: Probable methyltransferase-like protein 25 (597 aa).

The span at 245-254 (ECKGDAESVQ) shows a compositional bias: basic and acidic residues. 2 disordered regions span residues 245–265 (ECKG…DLSA) and 317–342 (TSSQ…KARD). Residues 317-326 (TSSQVQNTEK) show a composition bias toward polar residues.

Functionally, probable methyltransferase. This chain is Probable methyltransferase-like protein 25 (Mettl25), found in Mus musculus (Mouse).